A 143-amino-acid chain; its full sequence is Hemoglobin subunit alpha-2 (143 aa).

The residue at position 2 (S2) is an N-acetylserine. The Globin domain maps to 2-143; that stretch reads SLSAKDKATV…LALALSEKYR (142 aa). H60 provides a ligand contact to O2. H89 lines the heme b pocket.

This sequence belongs to the globin family. In terms of assembly, hb 2 is a heterotetramer of two alpha-2 and two beta-1 chains. Hb 3 is a heterotetramer of two alpha-2 and two beta-2 chains. In terms of tissue distribution, red blood cells.

In terms of biological role, involved in oxygen transport from gills to the various peripheral tissues. This Boreogadus saida (Polar cod) protein is Hemoglobin subunit alpha-2 (hba2).